Reading from the N-terminus, the 321-residue chain is Olfactory receptor 52N4 (321 aa).

Over 1-27 the chain is Extracellular; that stretch reads MLTLNKTDLIPASFILNGVPGLEDTQL. Asparagine 5 carries an N-linked (GlcNAc...) asparagine glycan. The chain crosses the membrane as a helical span at residues 28–48; it reads WISFPFCSMYVVAMVGNCGLL. The Cytoplasmic segment spans residues 49–56; it reads YLIHYEDA. Residues 57 to 77 traverse the membrane as a helical segment; the sequence is LHKPMYYFLAMLSFTDLVMCS. The Extracellular portion of the chain corresponds to 78-101; the sequence is STIPKALCIFWFHLKDIGFDECLV. A disulfide bond links cysteine 99 and cysteine 191. A helical membrane pass occupies residues 102 to 122; sequence QMFFTHTFTGMESGVLMLMAL. Residues 123–141 are Cytoplasmic-facing; it reads DRYVAICYPLRYSTILTNP. Residues 142–162 traverse the membrane as a helical segment; the sequence is VIAKVGTATFLRGVLLIIPFT. Residues 163-198 are Extracellular-facing; sequence FLTKLLPYCRGNILPHTYCDHMSVAKLSCGNVKVNA. The chain crosses the membrane as a helical span at residues 199-219; it reads IYGLMVALLIWGFDILCITNS. At 220-239 the chain is on the cytoplasmic side; that stretch reads YTMILRAVVSLSSADARQKA. The helical transmembrane segment at 240–260 threads the bilayer; it reads FNTCTAHICAIVFSYTPAFFS. The Extracellular segment spans residues 261 to 276; sequence FFSHRFGEHIIPPSCH. Residues 277 to 297 traverse the membrane as a helical segment; the sequence is IIVANIYLLLPPTMNPIVYGV. Residues 298-321 are Cytoplasmic-facing; that stretch reads KTKQIRDCVIRILSGSKDTKSYSM.

Belongs to the G-protein coupled receptor 1 family.

It localises to the cell membrane. Odorant receptor. This chain is Olfactory receptor 52N4 (OR52N4), found in Homo sapiens (Human).